The chain runs to 416 residues: Adenylosuccinate synthetase (416 aa).

GTP-binding positions include G13–K19 and G41–T43. D14 (proton acceptor) is an active-site residue. The Mg(2+) site is built by D14 and G41. IMP is bound by residues D14–K17, N39–H42, T126, R140, Q220, T235, and R299. H42 serves as the catalytic Proton donor. Residue V295–R301 participates in substrate binding. GTP-binding positions include R301, K327–D329, and S405–S407.

The protein belongs to the adenylosuccinate synthetase family. Homodimer. Requires Mg(2+) as cofactor.

It localises to the cytoplasm. The catalysed reaction is IMP + L-aspartate + GTP = N(6)-(1,2-dicarboxyethyl)-AMP + GDP + phosphate + 2 H(+). The protein operates within purine metabolism; AMP biosynthesis via de novo pathway; AMP from IMP: step 1/2. Its function is as follows. Plays an important role in the de novo pathway of purine nucleotide biosynthesis. Catalyzes the first committed step in the biosynthesis of AMP from IMP. The sequence is that of Adenylosuccinate synthetase from Campylobacter jejuni subsp. jejuni serotype O:6 (strain 81116 / NCTC 11828).